Here is a 249-residue protein sequence, read N- to C-terminus: tRNA (guanine-N(1)-)-methyltransferase (249 aa).

S-adenosyl-L-methionine is bound by residues Gly-113 and Ile-133–Leu-138.

The protein belongs to the RNA methyltransferase TrmD family. In terms of assembly, homodimer.

The protein resides in the cytoplasm. The catalysed reaction is guanosine(37) in tRNA + S-adenosyl-L-methionine = N(1)-methylguanosine(37) in tRNA + S-adenosyl-L-homocysteine + H(+). Specifically methylates guanosine-37 in various tRNAs. The protein is tRNA (guanine-N(1)-)-methyltransferase of Aliivibrio salmonicida (strain LFI1238) (Vibrio salmonicida (strain LFI1238)).